The chain runs to 307 residues: Protoheme IX farnesyltransferase (307 aa).

A run of 8 helical transmembrane segments spans residues 32–52, 65–85, 108–128, 131–151, 158–178, 186–206, 251–271, and 287–307; these read MGIVNSNTLTVFTGFWLALHF, FFTIVGSGLVMAGVCCLNNYI, PGFALTFGLVILLLGFVFLLL, PMAVLMGFIGAFTYVVLYSLW, LNTVVGSISGAVPPLIGWAAI, IAWMLFLIMFIWQIPHFLALA, LGITFMVIATLLNIGWIVLGF, and FVYSLNYLTILFVSMIVVTFF.

It belongs to the UbiA prenyltransferase family. Protoheme IX farnesyltransferase subfamily. Interacts with CtaA.

The protein localises to the cell membrane. The enzyme catalyses heme b + (2E,6E)-farnesyl diphosphate + H2O = Fe(II)-heme o + diphosphate. The protein operates within porphyrin-containing compound metabolism; heme O biosynthesis; heme O from protoheme: step 1/1. Its function is as follows. Converts heme B (protoheme IX) to heme O by substitution of the vinyl group on carbon 2 of heme B porphyrin ring with a hydroxyethyl farnesyl side group. The sequence is that of Protoheme IX farnesyltransferase from Bacillus anthracis (strain A0248).